Here is a 103-residue protein sequence, read N- to C-terminus: Secreted LysM effector Mgx1LysM (103 aa).

The first 18 residues, 1-18 (MKVTTIIAALLSVAVVDA), serve as a signal peptide directing secretion. Disulfide bonds link Cys31-Cys89 and Cys62-Cys97. Residues 37–85 (IPYVVKKGDTLTHIAHDIYKRKVGICDLAYTNHIGYNPDLIYEDQTLLI) enclose the LysM domain. 4 residues coordinate chitin: Gly44, Thr48, Asp75, and Ile77.

It belongs to the secreted LysM effector family. As to quaternary structure, forms homodimers in a chitin-independent manner through interactions at the N-termini of Mgx1LysM monomers. Homodimers are further polymerized in a chitin-dependent manner.

It is found in the secreted. Its subcellular location is the cell wall. In terms of biological role, secreted effector that enables the plant pathogenic fungus to manipulate host defenses for successful infection. Binds chitin and suppresses the chitin-induced reactive oxygen species (ROS) burst. Chitin-induced polymerization of homodimers forms a contiguous Mg1LysM highly oligomeric super-complexe that is anchored to the chitin in the fungal cell wall to prevent hydrolysis by host chitinases. The protein is Secreted LysM effector Mgx1LysM of Zymoseptoria tritici (strain CBS 115943 / IPO323) (Speckled leaf blotch fungus).